The following is a 92-amino-acid chain: Conotoxin Ac8.1 (92 aa).

Residues 1–19 form the signal peptide; sequence LKMGAMFVLLLLFTLASSQ. The propeptide occupies 20 to 44; it reads QEGDVQARKTSLKSDFYRALRQYDR. At glutamine 45 the chain carries Pyrrolidone carboxylic acid.

It belongs to the conotoxin S superfamily. In terms of processing, contains 5 disulfide bonds. In terms of tissue distribution, expressed by the venom duct.

The protein resides in the secreted. This Conus achatinus (Little frog cone) protein is Conotoxin Ac8.1.